The following is a 371-amino-acid chain: F-box protein At2g26850 (371 aa).

The region spanning 59–105 (KMSILDLPDLPLDCILELLPPSELCTMARVCSSLRERCVSDHLWEKH) is the F-box domain.

The protein is F-box protein At2g26850 of Arabidopsis thaliana (Mouse-ear cress).